The primary structure comprises 408 residues: WD repeat-containing protein JIP5 (408 aa).

WD repeat units lie at residues 5 to 44 (PVGS…DSHN), 50 to 86 (PSKR…TTDI), 87 to 130 (DARS…SVKT), 133 to 172 (QHFD…PKVV), 177 to 216 (DQED…GDCV), and 221 to 267 (GHPL…FLGV). Positions 311–408 (VDSDEEEDDE…VIDKDFFDGL (98 aa)) are disordered. Acidic residues-rich tracts occupy residues 313-339 (SDEE…EDEE) and 356-366 (DESDDEDEEME). Residues 396–408 (KETVIDKDFFDGL) are compositionally biased toward basic and acidic residues.

Belongs to the WD repeat WDR55 family.

The protein localises to the nucleus. Its subcellular location is the nucleolus. This is WD repeat-containing protein JIP5 (JIP5) from Coprinopsis cinerea (strain Okayama-7 / 130 / ATCC MYA-4618 / FGSC 9003) (Inky cap fungus).